The sequence spans 213 residues: Oxidase ustYa (213 aa).

The segment at 1–26 (MAERSSNGYKEVPVRQSEESTIAEEE) is disordered. Residues 48 to 68 (AVWFLIALLLLSNIGLLGGLI) traverse the membrane as a helical segment. A glycan (N-linked (GlcNAc...) asparagine) is linked at Asn-98. Short sequence motifs (HXXHC) lie at residues 123-127 (HQLHC) and 150-154 (HLMHC).

Belongs to the ustYa family.

The protein resides in the membrane. It functions in the pathway mycotoxin biosynthesis. Functionally, oxidase; part of the gene cluster that mediates the biosynthesis of the secondary metabolite ustiloxin B, an antimitotic tetrapeptide. First, ustA is processed by the subtilisin-like endoprotease Kex2 that is outside the ustiloxin B gene cluster, at the C-terminal side of Arg-Lys, after transfer to Golgi apparatus through the endoplasmic reticulum (ER). Cleavage by KEX2 generates 16 peptides YAIG-I to YAIG-XVI. To process the precursor peptide further, at least two peptidases are necessary to cleave the N-terminal and C-terminal sides of the Tyr-Ala-Ile-Gly core peptide which serves as backbone for the synthesis of ustiloxin B, through cyclization and modification of the tyrosine with a non-protein coding amino acid, norvaline. One of the two peptidases must be the serine peptidase ustP; and the other pepdidase is probably ustH. Macrocyclization of the core peptide derived from ustA requires the tyrosinase ustQ, as well as the homologous oxidases ustYa and ustYb, and leads to the production of the first cyclization product N-desmethylustiloxin F. For the formation of N-desmethylustiloxin F, three oxidation steps are required, hydroxylation at the benzylic position, hydroxylation at either the aromatic ring of Tyr or beta-position of Ile, and oxidative cyclization. UstQ may catalyze the oxidation of a phenol moiety, whereas the ustYa and ustYb are most likely responsible for the remaining two-step oxidations. N-desmethylustiloxin F is then methylated by ustM to yield ustiloxin F which in turn substrate of the cytochrome P450 monooxygenase ustC which catalyzes the formation of S-deoxyustiloxin H. The flavoprotein monooxygenases ustF1 and ustF2 then participate in the modification of the side chain of S-deoxyustiloxin H, leading to the synthesis of an oxime intermediate, via ustiloxin H. Finally, carboxylative dehydration performed by the cysteine desulfurase-like protein ustD yields ustiloxin B. The protein is Oxidase ustYa of Aspergillus flavus (strain ATCC 200026 / FGSC A1120 / IAM 13836 / NRRL 3357 / JCM 12722 / SRRC 167).